Here is a 950-residue protein sequence, read N- to C-terminus: Defective chorion protein, FC106 isoform (950 aa).

Residues 1–19 (MRLFSLLPLLALLVVQAAG) form the signal peptide. 3 disordered regions span residues 23 to 60 (VTSD…PSIN), 184 to 212 (APAP…PDAP), and 268 to 294 (PAQP…EDPY). Positions 32 to 41 (AGSTTNSTTD) are enriched in polar residues. Positions 268–280 (PAQPAAAGTDAQA) are enriched in low complexity. Tandem repeats lie at residues 493–518 (QNPM…QQIQ), 519–544 (QNPM…QQIQ), 545–570 (QNPM…QQIQ), 571–596 (QNPM…QQIQ), and 597–622 (QNPM…QQIQ). The 12 X 26 AA approximate tandem repeats, Glu, Met-rich stretch occupies residues 493-788 (QNPMMMQQRQ…IQQQQRQMMQ (296 aa)). The stretch at 623–652 (QNPMMMQQRQWSEEQAKIQHDQQMAQQMAQ) is one 6; approximate repeat. One copy of the 7; approximate repeat lies at 653–680 (QGLMMTEQRQRQWSEDQAKIQQAQQMAQ). One copy of the 8; approximate repeat lies at 681-696 (QTPMMMPQMQQRQWTE). One copy of the 9; approximate repeat lies at 697–720 (DPQMVQQMQQRQWAEDQTRMQMAQ). One copy of the 10; approximate repeat lies at 721–733 (QNPMMQQQRQMAE). One copy of the 11; approximate repeat lies at 734 to 758 (NPQMMQQRQWSEEQTKIEQAQQMAQ). One copy of the 12; approximate repeat lies at 759–788 (QNQMMMQQMQQRQWSEDQAQIQQQQRQMMQ). The tract at residues 843–875 (GPQMPENEGTARHKVDALGVGGNKRKKSKSKSA) is disordered.

Proteolytic cleavage of isoform FC106 generates 2 further products, S80 and S60.

The protein resides in the secreted. In terms of biological role, required for proper assembly of the eggshell. In Drosophila melanogaster (Fruit fly), this protein is Defective chorion protein, FC106 isoform.